The following is a 336-amino-acid chain: UPF0284 protein PYRAB00380 (336 aa).

The protein belongs to the UPF0284 family.

The sequence is that of UPF0284 protein PYRAB00380 from Pyrococcus abyssi (strain GE5 / Orsay).